A 560-amino-acid polypeptide reads, in one-letter code: Nuclear receptor subfamily 5 group A member 2 (560 aa).

Positions 17 to 54 (GLPAIAPAPGSETPHSPKLEEKHREKRAGLPDRHRRPI) are disordered. Over residues 31–48 (HSPKLEEKHREKRAGLPD) the composition is skewed to basic and acidic residues. Residues 104–179 (EELCPVCGDK…VGMKLEAVRA (76 aa)) constitute a DNA-binding region (nuclear receptor). Residues Cys107, Cys110, Cys124, Cys127, Cys143, Cys149, Cys159, and Cys162 each coordinate Zn(2+). NR C4-type zinc fingers lie at residues 107-127 (CPVC…CESC) and 143-162 (CIEN…CPYC). The interval 173 to 188 (KLEAVRADRMRGGRNK) is C-terminal extension (CTE). The FTZ-F1 box signature appears at 189-208 (FGPMYKRDRALKQQKKALIR). Residue Lys289 forms a Glycyl lysine isopeptide (Lys-Gly) (interchain with G-Cter in SUMO1) linkage. Positions 319–558 (SIPHLILELL…NLLIEMLHAK (240 aa)) constitute an NR LBD domain. Residues Tyr535 and Lys539 each coordinate a phospholipid derivative. Residues 547–558 (YNNLLIEMLHAK) form an AF-2 region.

Belongs to the nuclear hormone receptor family. NR5 subfamily. In terms of assembly, monomer; Binds DNA as a monomer. Interacts with nuclear receptor corepressors NR0B1 and NR0B2; repressing NR5A2 nuclear receptor activity. Interacts with nuclear receptor coactivators CTNNB1, PPARGC1A and NCOA2; interaction takes place following ligand-binding and promotes target gene activation. Interacts (when sumoylated) with GPS2; interaction with GPS2 onto hepatic acute phase protein promoters prevents N-Cor corepressor complex dissociation. Interacts with HNF1A. Interacts with GRIP1. Sumoylated by SUMO1 at Lys-289 during the hepatic acute phase response, leading to promote interaction with GPS2 and prevent N-Cor corepressor complex dissociation.

It localises to the nucleus. It is found in the chromosome. Orphan nuclear receptor that binds DNA as a monomer to the 5'-TCAAGGCCA-3' sequence and controls expression of target genes: regulates key biological processes, such as early embryonic development, cholesterol and bile acid synthesis pathways, as well as liver and pancreas morphogenesis. Ligand-binding causes conformational change which causes recruitment of coactivators, promoting target gene activation. The specific ligand is unknown, but specific phospholipids, such as phosphatidylethanolamine, phosphatidylserine, dilauroyl phosphatidylcholine and diundecanoyl phosphatidylcholine can act as ligand in vitro. Acts as a pioneer transcription factor, which unwraps target DNA from histones and elicits local opening of closed chromatin. Plays a central role during preimplantation stages of embryonic development. Plays a minor role in zygotic genome activation (ZGA) by regulating a small set of two-cell stage genes. Plays a major role in morula development (2-16 cells embryos) by acting as a master regulator at the 8-cell stage, controlling expression of lineage-specifying transcription factors and genes involved in mitosis, telomere maintenance and DNA repair. Zygotic NR5A2 binds to both closed and open chromatin with other transcription factors, often at SINE B1/Alu repeats DNA elements, promoting chromatin accessibility at nearby regulatory regions. Also involved in the epiblast stage of development and embryonic stem cell pluripotency, by promoting expression of POU5F1/OCT4. Regulates other processes later in development, such as formation of connective tissue in lower jaw and middle ear, neural stem cell differentiation, ovarian follicle development and Sertoli cell differentiation. Involved in exocrine pancreas development and acinar cell differentiation. Acts as an essential transcriptional regulator of lipid metabolism. Key regulator of cholesterol 7-alpha-hydroxylase gene (CYP7A) expression in liver. Also acts as a negative regulator of inflammation in different organs, such as, liver and pancreas. Protects against intestinal inflammation via its ability to regulate glucocorticoid production. Plays an anti-inflammatory role during the hepatic acute phase response by acting as a corepressor: inhibits the hepatic acute phase response by preventing dissociation of the N-Cor corepressor complex. Acts as a regulator of immunity by promoting lymphocyte T-cell development, proliferation and effector functions. Also involved in resolution of endoplasmic reticulum stress in the liver. This chain is Nuclear receptor subfamily 5 group A member 2, found in Rattus norvegicus (Rat).